The primary structure comprises 250 residues: Copper homeostasis protein cutC homolog (250 aa).

Belongs to the CutC family.

In terms of biological role, involved in copper homeostasis. Affects body morphology and length, egg laying and brood size. This chain is Copper homeostasis protein cutC homolog (cutc-1), found in Caenorhabditis elegans.